We begin with the raw amino-acid sequence, 137 residues long: Small heat shock protein IbpA (137 aa).

A sHSP domain is found at 28–137; that stretch reads SQSNGGYPPY…ANKPRRIEIN (110 aa).

This sequence belongs to the small heat shock protein (HSP20) family. In terms of assembly, monomer. Forms homomultimers of about 100-150 subunits at optimal growth temperatures. Conformation changes to monomers at high temperatures or high ionic concentrations.

It localises to the cytoplasm. Functionally, associates with aggregated proteins, together with IbpB, to stabilize and protect them from irreversible denaturation and extensive proteolysis during heat shock and oxidative stress. Aggregated proteins bound to the IbpAB complex are more efficiently refolded and reactivated by the ATP-dependent chaperone systems ClpB and DnaK/DnaJ/GrpE. Its activity is ATP-independent. The sequence is that of Small heat shock protein IbpA from Klebsiella pneumoniae (strain 342).